The primary structure comprises 374 residues: Chaperone protein DnaJ (374 aa).

The 66-residue stretch at 5–70 (DYYEVLGVAR…DKRARYDRFG (66 aa)) folds into the J domain. Residues 135–213 (GDEVTLRLPK…CKGSGILQQV (79 aa)) form a CR-type zinc finger. Zn(2+) contacts are provided by Cys-148, Cys-151, Cys-165, Cys-168, Cys-187, Cys-190, Cys-201, and Cys-204. 4 CXXCXGXG motif repeats span residues 148–155 (CDECNGSG), 165–172 (CRHCGGNG), 187–194 (CPVCRGEG), and 201–208 (CPKCKGSG).

It belongs to the DnaJ family. In terms of assembly, homodimer. Zn(2+) serves as cofactor.

It localises to the cytoplasm. Participates actively in the response to hyperosmotic and heat shock by preventing the aggregation of stress-denatured proteins and by disaggregating proteins, also in an autonomous, DnaK-independent fashion. Unfolded proteins bind initially to DnaJ; upon interaction with the DnaJ-bound protein, DnaK hydrolyzes its bound ATP, resulting in the formation of a stable complex. GrpE releases ADP from DnaK; ATP binding to DnaK triggers the release of the substrate protein, thus completing the reaction cycle. Several rounds of ATP-dependent interactions between DnaJ, DnaK and GrpE are required for fully efficient folding. Also involved, together with DnaK and GrpE, in the DNA replication of plasmids through activation of initiation proteins. This Nitratidesulfovibrio vulgaris (strain DSM 19637 / Miyazaki F) (Desulfovibrio vulgaris) protein is Chaperone protein DnaJ.